Consider the following 173-residue polypeptide: MKYGIALFPSKRIQDFANSYRKRYDSHYALIPPHLTLKEPFEADDQKIKEIVKELRKIAAETDVIPLKVTKFSSFYPTSNVIYLKVEPNETLERLHERLHSGILADKSEYVFVPHITIGRDLPNAEYADVYGQLRMQNVHFEETVDRFHLLYQLENGSWTVYETFLVGGKEQE.

The Proton donor role is filled by His-34. Short sequence motifs (HXTX) lie at residues 34–37 and 115–118; these read HLTL and HITI. The active-site Proton acceptor is the His-115.

It belongs to the 2H phosphoesterase superfamily. YjcG family.

This Geobacillus sp. (strain WCH70) protein is Putative phosphoesterase GWCH70_0799.